A 488-amino-acid chain; its full sequence is 3-octaprenyl-4-hydroxybenzoate carboxy-lyase (488 aa).

A Mn(2+)-binding site is contributed by asparagine 172. Prenylated FMN is bound by residues 175–177, 189–191, and 194–195; these read IYR, RWL, and RG. Glutamate 238 is a binding site for Mn(2+). Residue aspartate 287 is the Proton donor of the active site.

Belongs to the UbiD family. Homohexamer. Prenylated FMN serves as cofactor. It depends on Mn(2+) as a cofactor.

The protein localises to the cell membrane. The catalysed reaction is a 4-hydroxy-3-(all-trans-polyprenyl)benzoate + H(+) = a 2-(all-trans-polyprenyl)phenol + CO2. Its pathway is cofactor biosynthesis; ubiquinone biosynthesis. Functionally, catalyzes the decarboxylation of 3-octaprenyl-4-hydroxy benzoate to 2-octaprenylphenol, an intermediate step in ubiquinone biosynthesis. This is 3-octaprenyl-4-hydroxybenzoate carboxy-lyase from Pseudomonas fluorescens (strain ATCC BAA-477 / NRRL B-23932 / Pf-5).